Consider the following 317-residue polypeptide: Acetyl-coenzyme A carboxylase carboxyl transferase subunit alpha (317 aa).

Positions 43–293 (RVRESMADIY…GDVISNALGE (251 aa)) constitute a CoA carboxyltransferase C-terminal domain.

Belongs to the AccA family. In terms of assembly, acetyl-CoA carboxylase is a heterohexamer composed of biotin carboxyl carrier protein (AccB), biotin carboxylase (AccC) and two subunits each of ACCase subunit alpha (AccA) and ACCase subunit beta (AccD).

The protein resides in the cytoplasm. It carries out the reaction N(6)-carboxybiotinyl-L-lysyl-[protein] + acetyl-CoA = N(6)-biotinyl-L-lysyl-[protein] + malonyl-CoA. It functions in the pathway lipid metabolism; malonyl-CoA biosynthesis; malonyl-CoA from acetyl-CoA: step 1/1. In terms of biological role, component of the acetyl coenzyme A carboxylase (ACC) complex. First, biotin carboxylase catalyzes the carboxylation of biotin on its carrier protein (BCCP) and then the CO(2) group is transferred by the carboxyltransferase to acetyl-CoA to form malonyl-CoA. The polypeptide is Acetyl-coenzyme A carboxylase carboxyl transferase subunit alpha (Rhizobium rhizogenes (strain K84 / ATCC BAA-868) (Agrobacterium radiobacter)).